The following is a 134-amino-acid chain: Glycine cleavage system H protein (134 aa).

The Lipoyl-binding domain maps to 24–106 (TVRVGITDYA…YGAGWLLDIQ (83 aa)). N6-lipoyllysine is present on K65.

This sequence belongs to the GcvH family. The glycine cleavage system is composed of four proteins: P, T, L and H. Requires (R)-lipoate as cofactor.

The glycine cleavage system catalyzes the degradation of glycine. The H protein shuttles the methylamine group of glycine from the P protein to the T protein. The protein is Glycine cleavage system H protein of Mycobacterium bovis (strain ATCC BAA-935 / AF2122/97).